The following is a 391-amino-acid chain: Somatostatin receptor type 1 (391 aa).

Over residues 1-11 (MFPNGTASSPS) the composition is skewed to low complexity. The segment at 1–49 (MFPNGTASSPSSPSPSPGSCGEGGGSRGPGAGAADGMEEPGRNASQNGT) is disordered. The Extracellular portion of the chain corresponds to 1 to 55 (MFPNGTASSPSSPSPSPGSCGEGGGSRGPGAGAADGMEEPGRNASQNGTLSEGQG). Asn4 carries N-linked (GlcNAc...) asparagine glycosylation. The span at 20–33 (CGEGGGSRGPGAGA) shows a compositional bias: gly residues. N-linked (GlcNAc...) asparagine glycans are attached at residues Asn43 and Asn47. A helical transmembrane segment spans residues 56-83 (SAILISFIYSVVCLVGLCGNSMVIYVIL). Residues 84–93 (RYAKMKTATN) are Cytoplasmic-facing. The helical transmembrane segment at 94–119 (IYILNLAIADELLMLSVPFLVTSTLL) threads the bilayer. At 120–130 (RHWPFGALLCR) the chain is on the extracellular side. Cys129 and Cys207 are disulfide-bonded. Residues 131-152 (LVLSVDAVNMFTSIYCLTVLSV) traverse the membrane as a helical segment. Over 153 to 174 (DRYVAVVHPIKAARYRRPTVAK) the chain is Cytoplasmic. The helical transmembrane segment at 175–195 (VVNLGVWVLSLLVILPIVVFS) threads the bilayer. Residues 196–218 (RTAANSDGTVACNMLMPEPAQRW) are Extracellular-facing. Residues 219–243 (LVGFVLYTFLMGFLLPVGAICLCYV) form a helical membrane-spanning segment. Residues 244–269 (LIIAKMRMVALKAGWQQRKRSERKIT) lie on the Cytoplasmic side of the membrane. Residues 270–295 (LMVMMVVMVFVICWMPFYVVQLVNVF) traverse the membrane as a helical segment. Topologically, residues 296-302 (AEQDDAT) are extracellular. Residues 303–326 (VSQLSVILGYANSCANPILYGFLS) form a helical membrane-spanning segment. The Cytoplasmic portion of the chain corresponds to 327 to 391 (DNFKRSFQRI…GTCTSRITTL (65 aa)). Cys338 carries S-palmitoyl cysteine lipidation.

This sequence belongs to the G-protein coupled receptor 1 family. In terms of assembly, interacts with SKB1.

The protein resides in the cell membrane. Receptor for somatostatin with higher affinity for somatostatin-14 than -28. This receptor is coupled via pertussis toxin sensitive G proteins to inhibition of adenylyl cyclase. In addition it stimulates phosphotyrosine phosphatase and Na(+)/H(+) exchanger via pertussis toxin insensitive G proteins. This Canis lupus familiaris (Dog) protein is Somatostatin receptor type 1 (SSTR1).